We begin with the raw amino-acid sequence, 521 residues long: Bifunctional purine biosynthesis protein PurH (521 aa).

Residues 1–145 (MIKQALISVS…KNHKDVIVIC (145 aa)) enclose the MGS-like domain.

Belongs to the PurH family.

It catalyses the reaction (6R)-10-formyltetrahydrofolate + 5-amino-1-(5-phospho-beta-D-ribosyl)imidazole-4-carboxamide = 5-formamido-1-(5-phospho-D-ribosyl)imidazole-4-carboxamide + (6S)-5,6,7,8-tetrahydrofolate. It carries out the reaction IMP + H2O = 5-formamido-1-(5-phospho-D-ribosyl)imidazole-4-carboxamide. Its pathway is purine metabolism; IMP biosynthesis via de novo pathway; 5-formamido-1-(5-phospho-D-ribosyl)imidazole-4-carboxamide from 5-amino-1-(5-phospho-D-ribosyl)imidazole-4-carboxamide (10-formyl THF route): step 1/1. It functions in the pathway purine metabolism; IMP biosynthesis via de novo pathway; IMP from 5-formamido-1-(5-phospho-D-ribosyl)imidazole-4-carboxamide: step 1/1. This chain is Bifunctional purine biosynthesis protein PurH, found in Herminiimonas arsenicoxydans.